Here is a 796-residue protein sequence, read N- to C-terminus: Protein translocase subunit SecA 2 (796 aa).

ATP is bound by residues Gln84, Gly102–Thr106, and Asp496.

This sequence belongs to the SecA family. Monomer and homodimer. Part of the essential Sec protein translocation apparatus which comprises SecA, SecYEG and auxiliary proteins SecDF. Other proteins may also be involved.

Its subcellular location is the cell membrane. The protein resides in the cytoplasm. It carries out the reaction ATP + H2O + cellular proteinSide 1 = ADP + phosphate + cellular proteinSide 2.. Part of the Sec protein translocase complex. Interacts with the SecYEG preprotein conducting channel. Has a central role in coupling the hydrolysis of ATP to the transfer of proteins into and across the cell membrane, serving as an ATP-driven molecular motor driving the stepwise translocation of polypeptide chains across the membrane. In Staphylococcus aureus (strain MSSA476), this protein is Protein translocase subunit SecA 2.